Reading from the N-terminus, the 262-residue chain is Methylthioribulose-1-phosphate dehydratase (262 aa).

Residue Cys115 participates in substrate binding. Zn(2+) contacts are provided by His133 and His135. The active-site Proton donor/acceptor is Glu158. Zn(2+) is bound at residue His223.

It belongs to the aldolase class II family. MtnB subfamily. The cofactor is Zn(2+).

The protein localises to the cytoplasm. It carries out the reaction 5-(methylsulfanyl)-D-ribulose 1-phosphate = 5-methylsulfanyl-2,3-dioxopentyl phosphate + H2O. The protein operates within amino-acid biosynthesis; L-methionine biosynthesis via salvage pathway; L-methionine from S-methyl-5-thio-alpha-D-ribose 1-phosphate: step 2/6. Its function is as follows. Catalyzes the dehydration of methylthioribulose-1-phosphate (MTRu-1-P) into 2,3-diketo-5-methylthiopentyl-1-phosphate (DK-MTP-1-P). The chain is Methylthioribulose-1-phosphate dehydratase from Meyerozyma guilliermondii (strain ATCC 6260 / CBS 566 / DSM 6381 / JCM 1539 / NBRC 10279 / NRRL Y-324) (Yeast).